A 221-amino-acid polypeptide reads, in one-letter code: Histidine biosynthesis bifunctional protein HisIE (221 aa).

The phosphoribosyl-AMP cyclohydrolase stretch occupies residues 1–129; the sequence is MAYSKNFSIE…AKKTSPFSNI (129 aa). The tract at residues 130–221 is phosphoribosyl-ATP pyrophosphohydrolase; the sequence is CSELFDTLHE…VLESRRGKNN (92 aa).

It in the N-terminal section; belongs to the PRA-CH family. This sequence in the C-terminal section; belongs to the PRA-PH family.

Its subcellular location is the cytoplasm. It carries out the reaction 1-(5-phospho-beta-D-ribosyl)-ATP + H2O = 1-(5-phospho-beta-D-ribosyl)-5'-AMP + diphosphate + H(+). The enzyme catalyses 1-(5-phospho-beta-D-ribosyl)-5'-AMP + H2O = 1-(5-phospho-beta-D-ribosyl)-5-[(5-phospho-beta-D-ribosylamino)methylideneamino]imidazole-4-carboxamide. It participates in amino-acid biosynthesis; L-histidine biosynthesis; L-histidine from 5-phospho-alpha-D-ribose 1-diphosphate: step 2/9. Its pathway is amino-acid biosynthesis; L-histidine biosynthesis; L-histidine from 5-phospho-alpha-D-ribose 1-diphosphate: step 3/9. The polypeptide is Histidine biosynthesis bifunctional protein HisIE (Prochlorococcus marinus subsp. pastoris (strain CCMP1986 / NIES-2087 / MED4)).